The primary structure comprises 259 residues: Global transcriptional regulator CodY (259 aa).

The GAF domain stretch occupies residues 1 to 155 (MDLLTRTRKI…GATVVGMEIL (155 aa)). The segment at residues 203-222 (ASKIADRVGITRSVIVNALR) is a DNA-binding region (H-T-H motif). Position 215 is a phosphoserine (Ser215).

This sequence belongs to the CodY family.

It is found in the cytoplasm. Its function is as follows. DNA-binding global transcriptional regulator which is involved in the adaptive response to starvation and acts by directly or indirectly controlling the expression of numerous genes in response to nutrient availability. During rapid exponential growth, CodY is highly active and represses genes whose products allow adaptation to nutrient depletion. This Shouchella clausii (strain KSM-K16) (Alkalihalobacillus clausii) protein is Global transcriptional regulator CodY.